A 348-amino-acid polypeptide reads, in one-letter code: Dihydroorotase (348 aa).

Zn(2+)-binding residues include H17 and H19. Substrate contacts are provided by residues 19–21 (HLR) and N45. K103, H140, and H178 together coordinate Zn(2+). N6-carboxylysine is present on K103. H140 provides a ligand contact to substrate. L223 lines the substrate pocket. D251 contributes to the Zn(2+) binding site. The active site involves D251. Residues H255 and A267 each contribute to the substrate site.

The protein belongs to the metallo-dependent hydrolases superfamily. DHOase family. Class II DHOase subfamily. Homodimer. Zn(2+) serves as cofactor.

The catalysed reaction is (S)-dihydroorotate + H2O = N-carbamoyl-L-aspartate + H(+). The protein operates within pyrimidine metabolism; UMP biosynthesis via de novo pathway; (S)-dihydroorotate from bicarbonate: step 3/3. Its function is as follows. Catalyzes the reversible cyclization of carbamoyl aspartate to dihydroorotate. In Shigella flexneri, this protein is Dihydroorotase.